The sequence spans 232 residues: Ribonuclease P protein component 3 (232 aa).

Belongs to the eukaryotic/archaeal RNase P protein component 3 family. As to quaternary structure, consists of a catalytic RNA component and at least 5 protein subunits.

The protein localises to the cytoplasm. The catalysed reaction is Endonucleolytic cleavage of RNA, removing 5'-extranucleotides from tRNA precursor.. In terms of biological role, part of ribonuclease P, a protein complex that generates mature tRNA molecules by cleaving their 5'-ends. The polypeptide is Ribonuclease P protein component 3 (Methanococcus maripaludis (strain DSM 14266 / JCM 13030 / NBRC 101832 / S2 / LL)).